Reading from the N-terminus, the 521-residue chain is Bifunctional purine biosynthesis protein PurH (521 aa).

The MGS-like domain maps to M1–V145.

It belongs to the PurH family.

It catalyses the reaction (6R)-10-formyltetrahydrofolate + 5-amino-1-(5-phospho-beta-D-ribosyl)imidazole-4-carboxamide = 5-formamido-1-(5-phospho-D-ribosyl)imidazole-4-carboxamide + (6S)-5,6,7,8-tetrahydrofolate. It carries out the reaction IMP + H2O = 5-formamido-1-(5-phospho-D-ribosyl)imidazole-4-carboxamide. Its pathway is purine metabolism; IMP biosynthesis via de novo pathway; 5-formamido-1-(5-phospho-D-ribosyl)imidazole-4-carboxamide from 5-amino-1-(5-phospho-D-ribosyl)imidazole-4-carboxamide (10-formyl THF route): step 1/1. It functions in the pathway purine metabolism; IMP biosynthesis via de novo pathway; IMP from 5-formamido-1-(5-phospho-D-ribosyl)imidazole-4-carboxamide: step 1/1. In Burkholderia pseudomallei (strain 1106a), this protein is Bifunctional purine biosynthesis protein PurH.